The primary structure comprises 684 residues: Phenoloxidase 1 (684 aa).

Positions 1-50 (MSDKNKLLLLFDRPLETVIVPRGPDQEAFDVPVDLLSDRYKAIGVQVSNR) are cleaved as a propeptide — removed by PPAF1. N-linked (GlcNAc...) asparagine glycosylation is present at N80. Residues H208, H212, and H237 each coordinate Cu cation. E349 (proton acceptor) is an active-site residue. Residues N352 and N356 are each glycosylated (N-linked (GlcNAc...) asparagine). Residues H364, H368, and H404 each coordinate Cu cation. 3 N-linked (GlcNAc...) asparagine glycosylation sites follow: N486, N491, and N545. 2 disulfide bridges follow: C579–C621 and C581–C628.

The protein belongs to the tyrosinase family. Dimer. Might form a homodimer or a heterodimer with PPO1. Might interact with PPAF2 (via CLIP domain); the interaction might be required for PPO1 activity. Cu(2+) is required as a cofactor. In terms of processing, propeptide cleaved by PPAF1. Hemocytes.

It localises to the secreted. Its function is as follows. This is a copper-containing oxidase that functions in the formation of pigments such as melanins and other polyphenolic compounds. Catalyzes the oxidation of o-diphenols (N-acetyldopamine, 4-methylcatechol and dopamine). Cannot oxidize monophenols and p-phenols (L-tyrosine, tyramine, gentisic acid and hydroquinone). Binds to the surface of hemocytes and is involved in hemocyte melanization. Activation of the enzyme in response to bacterial lipopolysaccharides (LPS) suggests it may play a role in innate immunity. This Holotrichia diomphalia (Korean black chafer) protein is Phenoloxidase 1.